A 220-amino-acid chain; its full sequence is Zip homologous protein 1 (220 aa).

Residues 6-44 (CNGCGCSPSKRQFFITACSHVFCETCRTTPTADFCHLCK) form an RING-type zinc finger. Residues 124–155 (LTSFEENNRKKLEDIERENEKLRNLISALELK) are a coiled coil. Disordered stretches follow at residues 166-186 (EFFMQGTPTSSNPSVAGSDVD) and 201-220 (RSDSSSSNCSSQSNRGGSLF). A compositionally biased stretch (polar residues) spans 171 to 180 (GTPTSSNPSV).

As to quaternary structure, interacts with zhp-2; the interaction is required for their chromosome association and stability. In terms of tissue distribution, expressed in the germline.

Its subcellular location is the chromosome. In terms of biological role, recruited co-dependently with zhp-2 to the synaptonemal complex between homologous chromosome pairs to regulate the formation and number of crossover events between homologs during meiotic recombination. Together with zhp-2, promotes the accumulation of pro-crossover proteins, including zhp-3 and zhp-4, at a designated crossover site along the recombination intermediate. Limits the number of crossover sites along a recombination intermediate by restricting the association of these pro-crossover proteins with other recombination sites during late prophase. Also, together with zhp-2, plays a role in chromosome remodeling following crossover formation to promote two successive rounds of chromosome segregation during meiosis. The polypeptide is Zip homologous protein 1 (Caenorhabditis elegans).